The primary structure comprises 1810 residues: MQTNEGEVEEESSSQVEQEDFVMEGHGKTPPPGEESKQEKEQEREEQLMEDKKRKKEDKKKKEATQKVTEQKTKVPEVTKPSLSQPTAASPIGSSPSPPVNGGNNAKRVAVPNGQPPSAARYMPREVPPRFRCQQDHKVLLKRGQPPPPSCMLLGGGAGPPPCTAPGANPNNNAQVTGALLQSESGTAPESTLGGAAASNYANSTWGPGASSNSGASPNPIHIWDKVIVDGSDMEEWPCIASKDTESSSENTTDNNSASNPGSEKSSLPGSTTSNKGKGSQCQAASSGNECNLGVWKSDPKAKSVQPPNSTSDSNNGLGNWRSTSGQDRIGPGSGFSNFNPNSNPSAWPALVQEGTSRKGALETESSSSSAQVSTVGQASREQQSKMENAGVNFVVSGREQAQIHNTDGPKNGNTNSLNLSSPNPMENKGMPFGMGLGNTSRSTDAPSQSTGDRKTGSVGSWGAARGPSGTDTVSGQSNSGNNGNNGKDREDSWKGASVPKPTGSKSDSWDNNNRSTGGSWNFGPQDNNDNKWGEGNKMTSGVSQGEWKQPTGSDELKIGEWSGPNQPNSSTGAWDNQKGHPLPENQGNAQAPCWGRSSSSAGSEVGGQSTGSNHKAGSSDSHNSGRRSYRPTHPDCQAVLQTLLSRTDLDPRVLSNTGWGQTQIKQDTVWDIEEVPRPEGKSDKGTEGWESAATQTKNSGGWGDAPSQSNQMKSGWGELSASTEWKDPKSTGGWNDYKNNNSSNWGGGRADEKTPSSWNESSCKDQGWGGGRQPNQGWTSGKNGWGEEVDQVKNNNWESSANKPVSGWGEGGQNEIGTWGNGGNTNLASKGGWEDCKRSPAWNETGRQPNSWNKQHQQQQQPPPPQPEASGSWGGPPPPPQGNVRPSNSNWSSGPQPTTPKDDEPSGWEEPSPQSISRKMDIDDGTSAWGDPNSYNYKNVNLWDKNSQGGPAPREPNLPTPMTGKSASVWSKSTPPAPDNGTSAWGEPNESSPGWGEMDDAGASTTGWGNTPANAPNAMKPNSKSMQDGWGESDGPVTGARHPSWEEEDDGGVWNTAGSQGSTSSHNSASWGQGGKKQMKCSLKGGNNDSWMNPLAKQFSNMGLLSQTEDNPSSKMDLSVDKKFDVDKRTMNLGDFNDIMRKDRPGFRPPNSKDLGTTDSGPYFEKGGSHGLFGNSTAQSRGLHTPVQPLSSSPGLRAQVPPQFISPQVSASMLKQFPNSGLNPGLFNVGPQLSPQQIAMLSQLPQIPQFQLACQLLLQQQQQQQQLLQNQRKISQAVRQQQEQQLARMVSALQQQQQQQQQQQRQPSMKHSPSHPVGPKPHLDNMVPNALNVGLPDLPTKGPIPGYGSGFSSGGMDYGMVGGKEAGTESRFKQWTSMMEGLPSVATQEATMHKNGAIVAPGKTRGGSPYNQFDIIPGDTLGGHTGPAGDSWLPAKSPPTNKIGSKSSNASWPPEFQPGVPWKGIQNIDPESDPYVTPGSVLGGTTTSPIVDTDHQLLRDNTTGSNSSLNTSLPSPGAWPYSASDNSFTNVHSTSAKFPDYKSTWSPDPIGHNPTHLSNKMWKNHISSRNTTPLTRPPPGLTNPKPASPWSSTAPRSVRGWGTQDSRIASASTWSDGGSVRPSYWLVLHNLTPQIDGSTLRTICMQHGPLLTFHLNLTQGTALIRYSTKQEAAKAQTALHMCVLGNTTILAEFATEDEVSRFLAQAQPPTPAATPSAPATGWQSLETSQNQADPVGPALNLFGGSTGLGQWSSSAGGSSGADLAGTSLWGPPNYSSSLWGVPTVEDPHRMGSPAPLLPGDLLGGGSDSI.

The span at 1 to 22 (MQTNEGEVEEESSSQVEQEDFV) shows a compositional bias: acidic residues. Disordered stretches follow at residues 1–221 (MQTN…PNPI), 235–1080 (EEWP…KKQM), 1141–1196 (MRKD…SSPG), and 1293–1329 (ALQQ…NMVP). Residues 33–75 (GEESKQEKEQEREEQLMEDKKRKKEDKKKKEATQKVTEQKTKV) are a coiled coil. 2 stretches are compositionally biased toward basic and acidic residues: residues 34–52 (EESK…MEDK) and 60–77 (KKKE…KVPE). Residues 37 to 1028 (KQEKEQEREE…AMKPNSKSMQ (992 aa)) form an interaction with argonaute proteins region. Over residues 88–106 (AASPIGSSPSPPVNGGNNA) the composition is skewed to low complexity. Basic and acidic residues predominate over residues 123-139 (MPREVPPRFRCQQDHKV). Residues 165-174 (APGANPNNNA) are compositionally biased toward low complexity. The span at 180–190 (LLQSESGTAPE) shows a compositional bias: polar residues. 2 stretches are compositionally biased toward low complexity: residues 207 to 220 (GPGA…SPNP) and 248 to 260 (SSEN…SASN). Composition is skewed to polar residues over residues 261–290 (PGSE…SGNE) and 306–327 (QPPN…TSGQ). Composition is skewed to low complexity over residues 335-346 (GFSNFNPNSNPS), 363-380 (ETES…GQAS), and 416-425 (NSLNLSSPNP). The segment covering 438 to 451 (GNTSRSTDAPSQST) has biased composition (polar residues). Residues 475-486 (SGQSNSGNNGNN) are compositionally biased toward low complexity. Polar residues-rich tracts occupy residues 504–528 (GSKS…PQDN), 564–575 (GPNQPNSSTGAW), 611–623 (TGSN…SDSH), and 655–667 (LSNT…QIKQ). Residues 675 to 688 (EVPRPEGKSDKGTE) are compositionally biased toward basic and acidic residues. 2 stretches are compositionally biased toward polar residues: residues 774–783 (QPNQGWTSGK) and 793–804 (VKNNNWESSANK). A compositionally biased stretch (gly residues) spans 809–824 (WGEGGQNEIGTWGNGG). Polar residues predominate over residues 846–857 (TGRQPNSWNKQH). Ser913 carries the phosphoserine modification. 5 stretches are compositionally biased toward polar residues: residues 934–950 (NSYN…NSQG), 964–975 (TGKSASVWSKST), 1004–1027 (ASTT…SKSM), 1057–1072 (TAGS…SASW), and 1175–1195 (GNST…SSSP). A silencing domain; interaction with CNOT1 and PAN3 region spans residues 1191 to 1700 (LSSSPGLRAQ…LAEFATEDEV (510 aa)). Positions 1295-1307 (QQQQQQQQQQQRQ) are enriched in low complexity. A Phosphoserine modification is found at Ser1409. A Phosphothreonine modification is found at Thr1426. Ser1438 carries the phosphoserine modification. A Phosphothreonine modification is found at Thr1441. The PABPC1-interacting motif-2 (PAM2) stretch occupies residues 1449 to 1467 (SNASWPPEFQPGVPWKGIQ). The disordered stretch occupies residues 1568–1619 (SSRNTTPLTRPPPGLTNPKPASPWSSTAPRSVRGWGTQDSRIASASTWSDGG). A compositionally biased stretch (polar residues) spans 1604–1617 (TQDSRIASASTWSD). The region spanning 1625-1697 (YWLVLHNLTP…TTILAEFATE (73 aa)) is the RRM domain. 2 disordered regions span residues 1706–1740 (QAQP…GPAL) and 1786–1810 (EDPH…SDSI). Over residues 1722–1733 (GWQSLETSQNQA) the composition is skewed to polar residues. Residues 1792-1801 (GSPAPLLPGD) are compositionally biased toward low complexity. A phosphoserine mark is found at Ser1793 and Ser1809.

This sequence belongs to the GW182 family. In terms of assembly, interacts with AGO1, AGO2, AGO3 and AGO4. Interacts with CNOT1; the interaction mediates the association with the CCR4-NOT complex. Interacts with PAN3; the interaction mediates the association with the PAN complex. Interacts with MOV10; the interaction is direct and RNA-dependent.

It localises to the cytoplasm. It is found in the P-body. In terms of biological role, plays a role in RNA-mediated gene silencing by both micro-RNAs (miRNAs) and short interfering RNAs (siRNAs). Required for miRNA-dependent translational repression and siRNA-dependent endonucleolytic cleavage of complementary mRNAs by argonaute family proteins. As scaffolding protein associates with argonaute proteins bound to partially complementary mRNAs and simultaneously can recruit CCR4-NOT and PAN deadenylase complexes. This Mus musculus (Mouse) protein is Trinucleotide repeat-containing gene 6B protein (Tnrc6b).